The chain runs to 193 residues: Transmembrane protein 276 (193 aa).

The signal sequence occupies residues methionine 1–alanine 32. The next 4 helical transmembrane spans lie at glycine 35–leucine 55, alanine 63–valine 83, serine 89–alanine 109, and valine 114–threonine 134.

The protein localises to the membrane. The chain is Transmembrane protein 276 from Bos taurus (Bovine).